Consider the following 330-residue polypeptide: uncharacterized protein (330 aa).

This sequence belongs to the ornithine cyclodeaminase/mu-crystallin family.

It is found in the cytoplasm. This is an uncharacterized protein from Schizosaccharomyces pombe (strain 972 / ATCC 24843) (Fission yeast).